Here is a 167-residue protein sequence, read N- to C-terminus: Urease accessory protein UreE (167 aa).

The protein belongs to the UreE family.

It localises to the cytoplasm. In terms of biological role, involved in urease metallocenter assembly. Binds nickel. Probably functions as a nickel donor during metallocenter assembly. The polypeptide is Urease accessory protein UreE (Pseudomonas aeruginosa (strain LESB58)).